Reading from the N-terminus, the 146-residue chain is Large ribosomal subunit protein uL15 (146 aa).

A compositionally biased stretch (basic and acidic residues) spans 1–13; sequence MKLHELKPAEGSR. Residues 1-59 are disordered; the sequence is MKLHELKPAEGSRKVRNRVGRGTSSGNGKTSGRGQKGQKARSGGGVRLGFEGGQTPLFR. 2 stretches are compositionally biased toward gly residues: residues 23-35 and 42-52; these read TSSGNGKTSGRGQ and SGGGVRLGFEG.

The protein belongs to the universal ribosomal protein uL15 family. As to quaternary structure, part of the 50S ribosomal subunit.

Binds to the 23S rRNA. This is Large ribosomal subunit protein uL15 from Streptococcus agalactiae serotype Ia (strain ATCC 27591 / A909 / CDC SS700).